A 385-amino-acid polypeptide reads, in one-letter code: Na(+)/H(+) antiporter NhaA (385 aa).

Transmembrane regions (helical) follow at residues 9-29, 45-65, 87-107, 114-134, 155-175, 198-218, 220-235, 245-265, 282-302, 312-332, and 345-365; these read YSAI…NVLD, IFGL…VFFF, IIPG…YLSV, GWPV…AIFG, AGIV…WIIV, TFLI…SVYQ, GIHA…IMLN, ALEP…AAMV, ILLG…IIAL, FFNL…SLLM, and QGVI…IILM.

This sequence belongs to the NhaA Na(+)/H(+) (TC 2.A.33) antiporter family.

It is found in the cell membrane. It carries out the reaction Na(+)(in) + 2 H(+)(out) = Na(+)(out) + 2 H(+)(in). Its function is as follows. Na(+)/H(+) antiporter that extrudes sodium in exchange for external protons. The chain is Na(+)/H(+) antiporter NhaA from Tropheryma whipplei (strain Twist) (Whipple's bacillus).